The following is a 160-amino-acid chain: Transcription elongation factor GreA (160 aa).

A coiled-coil region spans residues 1-72; that stretch reads MAEKTYPMTL…QISSLETKIR (72 aa).

The protein belongs to the GreA/GreB family.

Necessary for efficient RNA polymerase transcription elongation past template-encoded arresting sites. The arresting sites in DNA have the property of trapping a certain fraction of elongating RNA polymerases that pass through, resulting in locked ternary complexes. Cleavage of the nascent transcript by cleavage factors such as GreA or GreB allows the resumption of elongation from the new 3'terminus. GreA releases sequences of 2 to 3 nucleotides. This is Transcription elongation factor GreA from Streptococcus pneumoniae (strain Hungary19A-6).